Consider the following 201-residue polypeptide: Adenylyl-sulfate kinase (201 aa).

35 to 42 is an ATP binding site; that stretch reads GLSGSGKS. Catalysis depends on S109, which acts as the Phosphoserine intermediate.

This sequence belongs to the APS kinase family.

The catalysed reaction is adenosine 5'-phosphosulfate + ATP = 3'-phosphoadenylyl sulfate + ADP + H(+). The protein operates within sulfur metabolism; hydrogen sulfide biosynthesis; sulfite from sulfate: step 2/3. Catalyzes the synthesis of activated sulfate. This chain is Adenylyl-sulfate kinase, found in Prochlorococcus marinus (strain SARG / CCMP1375 / SS120).